Consider the following 428-residue polypeptide: C4-dicarboxylate transport protein (428 aa).

8 helical membrane passes run 8-28, 44-64, 76-96, 142-162, 184-204, 222-242, 326-346, and 352-372; these read SLYF…HFYP, LIKM…IAGM, VALL…LIIV, IGAF…LFGF, VIFG…FGAM, LIIC…GSIA, IFHQ…AAGV, and IVLA…LALI.

This sequence belongs to the dicarboxylate/amino acid:cation symporter (DAACS) (TC 2.A.23) family.

It is found in the cell inner membrane. In terms of biological role, responsible for the transport of dicarboxylates such as succinate, fumarate, and malate from the periplasm across the membrane. The polypeptide is C4-dicarboxylate transport protein (Enterobacter sp. (strain 638)).